The chain runs to 61 residues: Large ribosomal subunit protein uL30 (61 aa).

This sequence belongs to the universal ribosomal protein uL30 family. In terms of assembly, part of the 50S ribosomal subunit.

The sequence is that of Large ribosomal subunit protein uL30 from Exiguobacterium sibiricum (strain DSM 17290 / CCUG 55495 / CIP 109462 / JCM 13490 / 255-15).